The chain runs to 449 residues: Probable glycine dehydrogenase (decarboxylating) subunit 1 (449 aa).

Belongs to the GcvP family. N-terminal subunit subfamily. As to quaternary structure, the glycine cleavage system is composed of four proteins: P, T, L and H. In this organism, the P 'protein' is a heterodimer of two subunits.

The enzyme catalyses N(6)-[(R)-lipoyl]-L-lysyl-[glycine-cleavage complex H protein] + glycine + H(+) = N(6)-[(R)-S(8)-aminomethyldihydrolipoyl]-L-lysyl-[glycine-cleavage complex H protein] + CO2. Functionally, the glycine cleavage system catalyzes the degradation of glycine. The P protein binds the alpha-amino group of glycine through its pyridoxal phosphate cofactor; CO(2) is released and the remaining methylamine moiety is then transferred to the lipoamide cofactor of the H protein. This is Probable glycine dehydrogenase (decarboxylating) subunit 1 from Pyrococcus abyssi (strain GE5 / Orsay).